Here is a 236-residue protein sequence, read N- to C-terminus: Eukaryotic translation initiation factor 3 subunit K (236 aa).

The PCI domain maps to 48–218 (CDCNANRTLL…EAKKAEIRED (171 aa)).

This sequence belongs to the eIF-3 subunit K family.

The protein resides in the cytoplasm. Functionally, component of the eukaryotic translation initiation factor 3 (eIF-3) complex, which is involved in protein synthesis of a specialized repertoire of mRNAs and, together with other initiation factors, stimulates binding of mRNA and methionyl-tRNAi to the 40S ribosome. The eIF-3 complex specifically targets and initiates translation of a subset of mRNAs involved in cell proliferation. The chain is Eukaryotic translation initiation factor 3 subunit K from Pyricularia oryzae (strain Y34) (Rice blast fungus).